The chain runs to 274 residues: Thiamine kinase (274 aa).

Belongs to the thiamine kinase family.

It carries out the reaction thiamine + ATP = thiamine phosphate + ADP + H(+). It participates in cofactor biosynthesis; thiamine diphosphate biosynthesis; thiamine phosphate from thiamine: step 1/1. Catalyzes the ATP-dependent phosphorylation of thiamine to thiamine phosphate. Is involved in thiamine salvage. The chain is Thiamine kinase from Escherichia coli O139:H28 (strain E24377A / ETEC).